Reading from the N-terminus, the 422-residue chain is Elongation factor 1-alpha (422 aa).

Residues 5–221 enclose the tr-type G domain; sequence KPHMNLAVIG…DELKEPEKPS (217 aa). The tract at residues 14-21 is G1; the sequence is GHIDHGKS. 14-21 is a binding site for GTP; it reads GHIDHGKS. S21 is a binding site for Mg(2+). The segment at 70–74 is G2; the sequence is GITID. The segment at 91-94 is G3; sequence DCPG. Residues 91-95 and 146-149 contribute to the GTP site; these read DCPGH and NKMD. The interval 146 to 149 is G4; the sequence is NKMD. Residues 185–187 form a G5 region; it reads SAF.

This sequence belongs to the TRAFAC class translation factor GTPase superfamily. Classic translation factor GTPase family. EF-Tu/EF-1A subfamily.

It is found in the cytoplasm. It carries out the reaction GTP + H2O = GDP + phosphate + H(+). Its function is as follows. GTP hydrolase that promotes the GTP-dependent binding of aminoacyl-tRNA to the A-site of ribosomes during protein biosynthesis. The protein is Elongation factor 1-alpha of Methanosarcina acetivorans (strain ATCC 35395 / DSM 2834 / JCM 12185 / C2A).